The primary structure comprises 319 residues: Transaldolase (319 aa).

The active-site Schiff-base intermediate with substrate is Lys-132.

Belongs to the transaldolase family. Type 1 subfamily. In terms of assembly, homodimer.

It localises to the cytoplasm. It catalyses the reaction D-sedoheptulose 7-phosphate + D-glyceraldehyde 3-phosphate = D-erythrose 4-phosphate + beta-D-fructose 6-phosphate. It functions in the pathway carbohydrate degradation; pentose phosphate pathway; D-glyceraldehyde 3-phosphate and beta-D-fructose 6-phosphate from D-ribose 5-phosphate and D-xylulose 5-phosphate (non-oxidative stage): step 2/3. Transaldolase is important for the balance of metabolites in the pentose-phosphate pathway. The chain is Transaldolase from Alteromonas mediterranea (strain DSM 17117 / CIP 110805 / LMG 28347 / Deep ecotype).